The chain runs to 142 residues: NTF2-related export protein 2 (142 aa).

Residues 17 to 136 enclose the NTF2 domain; that stretch reads AAEEFVNIYY…WKIASDCFRF (120 aa).

Associates with NXF1, NXF2, NXF3 and NXF5.

It is found in the nucleus. It localises to the cytoplasm. Its function is as follows. Regulator of protein export for NES-containing proteins. Also plays a role in mRNA nuclear export. The polypeptide is NTF2-related export protein 2 (Homo sapiens (Human)).